We begin with the raw amino-acid sequence, 1045 residues long: Septation initiation network scaffold protein cdc11 (1045 aa).

Residues 1–11 show a composition bias toward basic and acidic residues; sequence MEQLWLEHDLS. Disordered stretches follow at residues 1 to 269 and 282 to 329; these read MEQL…NTKD and RGRM…PSLS. Polar residues predominate over residues 18–39; the sequence is PQEQGSDNSSEPPTTSNVNNTQ. Composition is skewed to low complexity over residues 40-52, 96-132, and 152-165; these read STGR…STEH, KQSP…NVSN, and ISSS…SEGS. The segment covering 166–176 has biased composition (polar residues); it reads LKSQQSNTRSN. A compositionally biased stretch (low complexity) spans 187–201; that stretch reads ASNASSSSSVVSSPS. Composition is skewed to polar residues over residues 226 to 238 and 320 to 329; these read NQLT…NSFE and DSSNAFPSLS. Ser-360 bears the Phosphoserine mark. The disordered stretch occupies residues 377 to 417; sequence DVGSSQSSSKTARLNSSPKSTLKTSSVKTRRSHSAQSSRKV. Polar residues predominate over residues 379-403; it reads GSSQSSSKTARLNSSPKSTLKTSSV. Ser-558 is modified (phosphoserine). 15 LRR repeats span residues 604-625, 627-646, 647-668, 669-690, 691-712, 713-734, 736-757, 758-779, 780-801, 802-822, 846-867, 868-889, 892-913, 914-935, and 940-962; these read RIIQ…SELC, SIEE…GCPV, TIRD…SNLL, NLQY…SSLI, HLRE…QHLD, GLLK…NSNL, RLEE…SSLQ, NLMV…QPMI, HLRI…QFPH, LRTL…RRLK, DIRN…HMFL, GVRY…IATS, NLRV…KPLQ, MIHR…CDIL, and QLNV…IDDS. The LRRCT domain maps to 1005-1043; it reads AWRTRRKMYAEAILLACPHLEWLDGSDVSQSSRAAFTKS.

In terms of assembly, interacts with sid4. When hyperphosphorylated, interacts with byr4. Also interacts with spg1, sid2, cdc13 and cdc16. Post-translationally, phosphorylated by cdc7 and cdk1. Hyperphosphorylated during anaphase. Dephosphorylated by par1.

The protein localises to the cytoplasm. It localises to the cytoskeleton. It is found in the microtubule organizing center. The protein resides in the spindle pole body. Its function is as follows. Essential for the onset of septum formation. Involved in the organization of astral microtubules during mitosis. Acts as a bridge between sid4 and the other SIN proteins mediating their association with the spindle pole body (SPB). The sid4-cdc11 complex organizes a signaling hub on the SPB which coordinates cell and nuclear division. The sequence is that of Septation initiation network scaffold protein cdc11 (cdc11) from Schizosaccharomyces pombe (strain 972 / ATCC 24843) (Fission yeast).